The primary structure comprises 434 residues: Neuropeptide receptor 22 (434 aa).

At 1 to 55 (MDEGGGIGSSLLSRITTTASEIMMRNEPTTTENPAVQEMNHIYHLTPSMKMLCIL) the chain is on the extracellular side. Residues 56–76 (FYSILCVCCVYGNVLVILVIV) traverse the membrane as a helical segment. The Cytoplasmic segment spans residues 77–86 (YFKRLRTATN). Residues 87–107 (ILILNLAVADLLISVFCIPFS) traverse the membrane as a helical segment. Residues 108–128 (YWQVLIYDDQRWLFGSMMCSL) lie on the Extracellular side of the membrane. Cys126 and Cys204 are joined by a disulfide. A helical transmembrane segment spans residues 129 to 149 (LAFLQAMAVFLSAWTLVVISF). The Cytoplasmic portion of the chain corresponds to 150–169 (DRWMAIMFLLTPNIRITRRR). The helical transmembrane segment at 170-190 (ALYLVAATWIFSILMALPLLF) threads the bilayer. Topologically, residues 191–226 (TTRFFEDQDGLPNCGENWTYFGDSGEQVRKVYSSMV) are extracellular. The N-linked (GlcNAc...) asparagine glycan is linked to Asn207. Residues 227–247 (LILQYVVPQAVLIITYTHIGI) traverse the membrane as a helical segment. The Cytoplasmic segment spans residues 248–277 (KMWNSRVPGMQNGATKKMIVDRHESVKKLV). Residues 278–298 (PMVILISALFALCWLPLLILI) traverse the membrane as a helical segment. Over 299–310 (NVIPEFYPDINS) the chain is Extracellular. A helical transmembrane segment spans residues 311-331 (WGYILYLWWFAHGLAMSHSMV). The Cytoplasmic segment spans residues 332-434 (NPIIYFIRNA…VRNNSANSLA (103 aa)).

It belongs to the G-protein coupled receptor 1 family. As to expression, expressed in many cells, mainly in the head region, with expression detected in the head muscles, I2 neurons, MC neurons, RIH neuron, AIA neurons, AUA neurons, ASK neurons, ASI neurons, a few B-type motorneurons in the posterior ventral nerve cord, pharyngeal muscles, body wall muscles, the intestine and a few classes of unidentified cells anterior to the nerve ring. Expression in the MC neurons is important to mediate suppression of feeding while expression in the RIH neuron is important for the facilitation of egg-laying. No expression detected in other tissues including hypodermis.

It is found in the cell membrane. In terms of biological role, receptor for the LURY-1-1 and LURY-1-2 peptides which control food-related processes including feeding, lifespan, egg-laying and roaming behavior. Receptor for flp-7 which stimulates serotonin-induced fat loss. Serotonin induces secretion of flp-7 from neurons and binding to npr-22 which leads to induction of the atgp-1 lipase and subsequent fat loss. Acts in vitro as a receptor for the flp-7 FMRFamide-like neuropeptides TPMQRSSMVRF-amide, SPMQRSSMVRF-amide, SPMERSAMVRF-amide and SPMDRSKMVRF-amide. Also acts in vitro as a receptor for a number of other FMRFamide-like neuropeptides including the flp-1 neuropeptide PNFMRY-amide, the flp-9 neuropeptide KPSFVRF-amide, the flp-11 neuropeptides AMRNALVRF-amide, ASGGMRNALVRF-amide and NGAPQPFVRF-amide, the flp-13 neuropeptides AADGAPLIRF-amide, ASPSAPLIRF-amide, SPSAVPLIRF-amide, SAAAPLIRF-amide and ASSAPLIRF-amide, and the flp-22 neuropeptide SPSAKWMRF-amide. The SPMERSAMVRF-amide neuropeptide from flp-7 acts as the strongest in vitro activator of npr-22. This chain is Neuropeptide receptor 22, found in Caenorhabditis elegans.